The primary structure comprises 502 residues: Smr domain-containing protein C1235.03 (502 aa).

The tract at residues 150 to 184 (LITSNIGHRSRQRKKKTKKATNSRKPLSKFQSNTE) is disordered. The segment covering 157-171 (HRSRQRKKKTKKATN) has biased composition (basic residues). The 49-residue stretch at 411 to 459 (SLDLHGATVREAKTIVRERVAAWWAKEADTSPNSIRPFVIVTGRGNHSI) folds into the Smr domain.

The protein resides in the nucleus. It is found in the nucleolus. This chain is Smr domain-containing protein C1235.03, found in Schizosaccharomyces pombe (strain 972 / ATCC 24843) (Fission yeast).